The primary structure comprises 749 residues: Transcription factor RFX3 (749 aa).

Residues 183-258 (HLQWLLDNYE…YHYYGIRVKP (76 aa)) constitute a DNA-binding region (RFX-type winged-helix). Residues 663–699 (VSPGNLDKDEGSEVESETDEDLDDSSEPRAKREKTEL) are disordered. Acidic residues predominate over residues 674–687 (SEVESETDEDLDDS). Basic and acidic residues predominate over residues 688 to 698 (SEPRAKREKTE).

It belongs to the RFX family. Heterodimer; heterodimerizes with RFX1 and RFX2, and RFX6. As to expression, expressed in ciliated cells of the node and in the ciliated ependymal cells of the subcommissural organ (SCO), choroid plexuses (CP) and ventricular walls during embryonic and postnatal development. Expressed in developing and mature pancreatic endocrine cells during embryogenesis and in adults (at protein level).

It localises to the nucleus. Transcription factor required for ciliogenesis and islet cell differentiation during endocrine pancreas development. Essential for the differentiation of nodal monocilia and left-right asymmetry specification during embryogenesis. Required for the biogenesis of motile cilia by governing growth and beating efficiency of motile cells. Also required for ciliated ependymal cell differentiation. Together with RFX6, participates in the differentiation of 4 of the 5 islet cell types during endocrine pancreas development, with the exception of pancreatic PP (polypeptide-producing) cells. Regulates transcription by forming a heterodimer with another RFX protein and binding to the X-box in the promoter of target genes. Regulates the expression of genes involved in ciliary assembly (DYNC2LI1, FOXJ1 and BBS4) and genes involved in ciliary motility (DNAH11, DNAH9 and DNAH5). Represses transcription of MAP1A in non-neuronal cells but not in neuronal cells. The chain is Transcription factor RFX3 (Rfx3) from Mus musculus (Mouse).